The sequence spans 602 residues: Elongation factor 4 (602 aa).

The tr-type G domain maps to 7–189 (KYIRNFSIVA…AIVSKVPAPY (183 aa)). GTP is bound by residues 19-24 (DHGKST) and 136-139 (NKID).

This sequence belongs to the TRAFAC class translation factor GTPase superfamily. Classic translation factor GTPase family. LepA subfamily.

It is found in the cell membrane. The catalysed reaction is GTP + H2O = GDP + phosphate + H(+). Its function is as follows. Required for accurate and efficient protein synthesis under certain stress conditions. May act as a fidelity factor of the translation reaction, by catalyzing a one-codon backward translocation of tRNAs on improperly translocated ribosomes. Back-translocation proceeds from a post-translocation (POST) complex to a pre-translocation (PRE) complex, thus giving elongation factor G a second chance to translocate the tRNAs correctly. Binds to ribosomes in a GTP-dependent manner. In Clostridium botulinum (strain Loch Maree / Type A3), this protein is Elongation factor 4.